Reading from the N-terminus, the 1198-residue chain is DNA polymerase II large subunit (1198 aa).

Disordered stretches follow at residues 281–332 and 534–553; these read YKTG…PQKK and HWAE…AAES. Residues 286–319 are compositionally biased toward acidic residues; sequence DTDEADADSDDGTDEDAADDSDIDDSSAGDEEAD.

Belongs to the archaeal DNA polymerase II family. In terms of assembly, heterodimer of a large subunit and a small subunit.

The enzyme catalyses DNA(n) + a 2'-deoxyribonucleoside 5'-triphosphate = DNA(n+1) + diphosphate. It carries out the reaction Exonucleolytic cleavage in the 3'- to 5'-direction to yield nucleoside 5'-phosphates.. In terms of biological role, possesses two activities: a DNA synthesis (polymerase) and an exonucleolytic activity that degrades single-stranded DNA in the 3'- to 5'-direction. Has a template-primer preference which is characteristic of a replicative DNA polymerase. This is DNA polymerase II large subunit from Natronomonas pharaonis (strain ATCC 35678 / DSM 2160 / CIP 103997 / JCM 8858 / NBRC 14720 / NCIMB 2260 / Gabara) (Halobacterium pharaonis).